A 322-amino-acid chain; its full sequence is CRISPR-associated endonuclease Cas1 (322 aa).

Residues E149, H214, and E229 each coordinate Mn(2+).

Belongs to the CRISPR-associated endonuclease Cas1 family. Homodimer, forms a heterotetramer with a Cas2 homodimer. Mg(2+) is required as a cofactor. Mn(2+) serves as cofactor.

Functionally, CRISPR (clustered regularly interspaced short palindromic repeat), is an adaptive immune system that provides protection against mobile genetic elements (viruses, transposable elements and conjugative plasmids). CRISPR clusters contain spacers, sequences complementary to antecedent mobile elements, and target invading nucleic acids. CRISPR clusters are transcribed and processed into CRISPR RNA (crRNA). Acts as a dsDNA endonuclease. Involved in the integration of spacer DNA into the CRISPR cassette. The protein is CRISPR-associated endonuclease Cas1 of Pyrococcus horikoshii (strain ATCC 700860 / DSM 12428 / JCM 9974 / NBRC 100139 / OT-3).